We begin with the raw amino-acid sequence, 442 residues long: HTH-type transcriptional regulator NorG (442 aa).

An HTH gntR-type domain is found at 2-46; it reads KIPPQRQLAIQYNVNRVTIIKSIELLEAEGFIYTKVGSGTYVNDY. A DNA-binding region (H-T-H motif) is located at residues 6–25; it reads QRQLAIQYNVNRVTIIKSIE. Lysine 288 is subject to N6-(pyridoxal phosphate)lysine.

The protein in the C-terminal section; belongs to the class-I pyridoxal-phosphate-dependent aminotransferase family. Pyridoxal 5'-phosphate serves as cofactor.

Positively regulates the expression of the NorB efflux pump and negatively regulates the expression of the AbcA efflux pump. Binds specifically to the promoters of norA, norB and norC and abcA genes. Could also have an aminotransferase activity. This chain is HTH-type transcriptional regulator NorG (norG), found in Staphylococcus aureus (strain Mu50 / ATCC 700699).